We begin with the raw amino-acid sequence, 154 residues long: UPF0756 membrane protein EAT1b_0668 (154 aa).

5 consecutive transmembrane segments (helical) span residues 5-25, 52-72, 82-102, 107-127, and 129-149; these read LFLLMLVLIGVISNNQSVIIA, WGVTIITIAVLVPIATGDIGF, PVGIVAFASGMFVAIAAGQGV, VDPVVTTALLAGTILAVGFMK, and IPVGPLVGAGIAALILGGYQV.

Belongs to the UPF0756 family.

Its subcellular location is the cell membrane. The protein is UPF0756 membrane protein EAT1b_0668 of Exiguobacterium sp. (strain ATCC BAA-1283 / AT1b).